The chain runs to 75 residues: MLIPYDQLEPDTLTRLIEDFVTREGTDNGDETPLQTRVLRVRHALTKGQAVIFFDLESQQCQLMLKHDVPKEFFD.

This sequence belongs to the UPF0270 family.

The chain is UPF0270 protein PSPTO_1630 from Pseudomonas syringae pv. tomato (strain ATCC BAA-871 / DC3000).